A 249-amino-acid polypeptide reads, in one-letter code: MGNKINPNGFRLGVTKGWNSRWYAGKKQYASLLKEDEQIRQLINKKLAAAGIARIEIERAGQQVNVIISAAKPGVVIGKGGESIKELRGDIERLVSAGTVAVNVAEIPNPNISAPLVALRIAEQIERRFAFRRAMKQAAQRVMESGARGVKVILSGRLGGAEQARTEKVLEGRVPLHTLRADIDYGTALARTTYGILGIKVLVFNGEVIGGKTETFARPQRRDRDERRPEGGDRPARRRPTARRRTGGE.

Residues 39 to 108 enclose the KH type-2 domain; sequence IRQLINKKLA…TVAVNVAEIP (70 aa). Positions 214–249 are disordered; sequence ETFARPQRRDRDERRPEGGDRPARRRPTARRRTGGE. Residues 220 to 235 are compositionally biased toward basic and acidic residues; that stretch reads QRRDRDERRPEGGDRP. Residues 236–249 show a composition bias toward basic residues; the sequence is ARRRPTARRRTGGE.

This sequence belongs to the universal ribosomal protein uS3 family. In terms of assembly, part of the 30S ribosomal subunit. Forms a tight complex with proteins S10 and S14.

In terms of biological role, binds the lower part of the 30S subunit head. Binds mRNA in the 70S ribosome, positioning it for translation. This Deinococcus radiodurans (strain ATCC 13939 / DSM 20539 / JCM 16871 / CCUG 27074 / LMG 4051 / NBRC 15346 / NCIMB 9279 / VKM B-1422 / R1) protein is Small ribosomal subunit protein uS3.